Consider the following 407-residue polypeptide: MTVTNTYNPTLFFTRVVFQRITKFTAKANEENEILFYALFVADLCLDMKGGLIAINKPSGRTSAQCLNELKKIISNSELAQYFRPAPPHPNDRNRRRRKSNRLPDIKIGHGGTLDPLASGVLVVGLGTGTKQLSSLLSCMKTYRATALFGCSTDTYDSAGKIIKIAVHIPTKEEILSGLDAFRGDISQLPPLYSALHIQGKRLYEYAREGIPLPESIKARSMHCEELILKDFIPKEEHTYTDPDEFASKEAIESEELLRPIEGGAERHDLLAKTEQDINPQDGDEKINAKSPTTNSVTDVAKDQTVTNPKKRKFEVTDLARGSRPAIGPIAVLDMTVSSGFYVRSLIHDLGRQVNSEAHMVDLVRLKQGSFALDDENCFDFSEFSAPGWEEKLAAAFKIDLKGDETS.

A disordered region spans residues 83-105 (FRPAPPHPNDRNRRRRKSNRLPD). Asp-115 functions as the Nucleophile in the catalytic mechanism. The interval 274–298 (TEQDINPQDGDEKINAKSPTTNSVT) is disordered. Ser-291 bears the Phosphoserine mark. Residue Thr-293 is modified to Phosphothreonine. The residue at position 296 (Ser-296) is a Phosphoserine. Thr-406 is subject to Phosphothreonine.

This sequence belongs to the pseudouridine synthase TruB family.

It is found in the nucleus. The protein localises to the mitochondrion. It catalyses the reaction uridine(55) in tRNA = pseudouridine(55) in tRNA. The catalysed reaction is a uridine in mRNA = a pseudouridine in mRNA. In terms of biological role, responsible for synthesis of pseudouridine from uracil-55 in the psi GC loop of transfer RNAs. Also catalyzes pseudouridylation of mRNAs with the consensus sequence 5'-GGUUCRA-3'. The polypeptide is tRNA pseudouridine synthase 4 (Schizosaccharomyces pombe (strain 972 / ATCC 24843) (Fission yeast)).